Here is a 336-residue protein sequence, read N- to C-terminus: UDP-N-acetylenolpyruvoylglucosamine reductase (336 aa).

Positions 17–188 constitute an FAD-binding PCMH-type domain; the sequence is GFDVRARYAS…TAVTLRLSRD (172 aa). Residue Arg164 is part of the active site. The Proton donor role is filled by Ser236. Glu332 is an active-site residue.

It belongs to the MurB family. FAD serves as cofactor.

Its subcellular location is the cytoplasm. It catalyses the reaction UDP-N-acetyl-alpha-D-muramate + NADP(+) = UDP-N-acetyl-3-O-(1-carboxyvinyl)-alpha-D-glucosamine + NADPH + H(+). The protein operates within cell wall biogenesis; peptidoglycan biosynthesis. Its function is as follows. Cell wall formation. This Cupriavidus pinatubonensis (strain JMP 134 / LMG 1197) (Cupriavidus necator (strain JMP 134)) protein is UDP-N-acetylenolpyruvoylglucosamine reductase.